A 281-amino-acid polypeptide reads, in one-letter code: Pantothenate synthetase (281 aa).

Position 30–37 (30–37 (MGNLHLGH)) interacts with ATP. The active-site Proton donor is the histidine 37. Glutamine 61 is a (R)-pantoate binding site. A beta-alanine-binding site is contributed by glutamine 61. 149-152 (GRKD) is a binding site for ATP. Residue glutamine 155 coordinates (R)-pantoate. ATP is bound by residues isoleucine 178 and 186–189 (MSSR).

The protein belongs to the pantothenate synthetase family. As to quaternary structure, homodimer.

It is found in the cytoplasm. It catalyses the reaction (R)-pantoate + beta-alanine + ATP = (R)-pantothenate + AMP + diphosphate + H(+). It participates in cofactor biosynthesis; (R)-pantothenate biosynthesis; (R)-pantothenate from (R)-pantoate and beta-alanine: step 1/1. Catalyzes the condensation of pantoate with beta-alanine in an ATP-dependent reaction via a pantoyl-adenylate intermediate. This is Pantothenate synthetase from Shewanella woodyi (strain ATCC 51908 / MS32).